A 249-amino-acid polypeptide reads, in one-letter code: 23S rRNA (guanosine-2'-O-)-methyltransferase RlmB (249 aa).

Residues Gly-200, Ile-220, and Leu-229 each contribute to the S-adenosyl-L-methionine site.

It belongs to the class IV-like SAM-binding methyltransferase superfamily. RNA methyltransferase TrmH family. RlmB subfamily.

Its subcellular location is the cytoplasm. It catalyses the reaction guanosine(2251) in 23S rRNA + S-adenosyl-L-methionine = 2'-O-methylguanosine(2251) in 23S rRNA + S-adenosyl-L-homocysteine + H(+). Functionally, specifically methylates the ribose of guanosine 2251 in 23S rRNA. This is 23S rRNA (guanosine-2'-O-)-methyltransferase RlmB from Xanthomonas axonopodis pv. citri (strain 306).